Consider the following 565-residue polypeptide: Methionine--tRNA ligase (565 aa).

The 'HIGH' region signature appears at 16-26; sequence PYAYGVPHLGN. Zn(2+)-binding residues include Cys-148, Cys-151, Cys-161, and Cys-164. The short motif at 338–342 is the 'KMSKS' region element; sequence KFSKS. Lys-341 lines the ATP pocket.

This sequence belongs to the class-I aminoacyl-tRNA synthetase family. MetG type 1 subfamily. Zn(2+) serves as cofactor.

The protein localises to the cytoplasm. It carries out the reaction tRNA(Met) + L-methionine + ATP = L-methionyl-tRNA(Met) + AMP + diphosphate. Its function is as follows. Is required not only for elongation of protein synthesis but also for the initiation of all mRNA translation through initiator tRNA(fMet) aminoacylation. This Thermofilum pendens (strain DSM 2475 / Hrk 5) protein is Methionine--tRNA ligase.